The following is a 551-amino-acid chain: Nucleobase-ascorbate transporter 3 (551 aa).

The disordered stretch occupies residues 1–30 (MVETGHHHQHPPAPAAAGHPPVPSMAMARN). 12 consecutive transmembrane segments (helical) span residues 56 to 76 (ETVV…VLIA), 92 to 111 (RVIQ…QTLI), 117 to 136 (TVMG…IRDY), 158 to 178 (SLII…WGNL), 179 to 199 (IRIF…LGLF), 202 to 222 (GFPL…LLII), 242 to 262 (ALLV…VSGA), 306 to 326 (VFGM…VFFA), 390 to 410 (FFMI…SIPL), 412 to 432 (IFAG…ISFI), 442 to 462 (NMYV…YFLA), and 481 to 501 (DILN…ATIL).

The protein belongs to the nucleobase:cation symporter-2 (NCS2) (TC 2.A.40) family. In terms of tissue distribution, expressed in the apical meristem 4 days after imbibition (DAI). Expressed in the major veins of rosette leaves and pedicels. Expressed in the root central cylinder, root meristems, root tips and lateral root primordia.

It is found in the membrane. This Arabidopsis thaliana (Mouse-ear cress) protein is Nucleobase-ascorbate transporter 3 (NAT3).